The chain runs to 424 residues: 3-phosphoshikimate 1-carboxyvinyltransferase (424 aa).

The 3-phosphoshikimate site is built by Lys-21, Ser-22, and Arg-26. A phosphoenolpyruvate-binding site is contributed by Lys-21. Residues Gly-91 and Arg-119 each contribute to the phosphoenolpyruvate site. The 3-phosphoshikimate site is built by Ser-164, Gln-166, Asp-310, and Lys-337. Gln-166 lines the phosphoenolpyruvate pocket. Asp-310 acts as the Proton acceptor in catalysis. Residues Arg-341 and Arg-382 each contribute to the phosphoenolpyruvate site.

Belongs to the EPSP synthase family. As to quaternary structure, monomer.

Its subcellular location is the cytoplasm. The enzyme catalyses 3-phosphoshikimate + phosphoenolpyruvate = 5-O-(1-carboxyvinyl)-3-phosphoshikimate + phosphate. It functions in the pathway metabolic intermediate biosynthesis; chorismate biosynthesis; chorismate from D-erythrose 4-phosphate and phosphoenolpyruvate: step 6/7. Its function is as follows. Catalyzes the transfer of the enolpyruvyl moiety of phosphoenolpyruvate (PEP) to the 5-hydroxyl of shikimate-3-phosphate (S3P) to produce enolpyruvyl shikimate-3-phosphate and inorganic phosphate. The polypeptide is 3-phosphoshikimate 1-carboxyvinyltransferase (Campylobacter hominis (strain ATCC BAA-381 / DSM 21671 / CCUG 45161 / LMG 19568 / NCTC 13146 / CH001A)).